The primary structure comprises 86 residues: Antitoxin VapB33 (86 aa).

In terms of biological role, antitoxin component of a type II toxin-antitoxin (TA) system. Upon expression in M.smegmatis neutralizes the effect of cognate toxin VapC33. This Mycobacterium tuberculosis (strain ATCC 25618 / H37Rv) protein is Antitoxin VapB33 (vapB33).